The primary structure comprises 352 residues: DNA polymerase IV (352 aa).

Residues 6-186 enclose the UmuC domain; sequence IIHIDMDAFY…LPLGKIPGAG (181 aa). Residues Asp10 and Asp104 each coordinate Mg(2+). The active site involves Glu105.

The protein belongs to the DNA polymerase type-Y family. As to quaternary structure, monomer. Mg(2+) is required as a cofactor.

The protein resides in the cytoplasm. It catalyses the reaction DNA(n) + a 2'-deoxyribonucleoside 5'-triphosphate = DNA(n+1) + diphosphate. In terms of biological role, poorly processive, error-prone DNA polymerase involved in untargeted mutagenesis. Copies undamaged DNA at stalled replication forks, which arise in vivo from mismatched or misaligned primer ends. These misaligned primers can be extended by PolIV. Exhibits no 3'-5' exonuclease (proofreading) activity. May be involved in translesional synthesis, in conjunction with the beta clamp from PolIII. The protein is DNA polymerase IV of Neisseria gonorrhoeae (strain ATCC 700825 / FA 1090).